The chain runs to 388 residues: Chorismate synthase (388 aa).

Residues arginine 39 and arginine 45 each contribute to the NADP(+) site. FMN-binding positions include 130–132, 251–252, glycine 296, 311–315, and arginine 337; these read RSS, NA, and KPIPT.

The protein belongs to the chorismate synthase family. As to quaternary structure, homotetramer. The cofactor is FMNH2.

The enzyme catalyses 5-O-(1-carboxyvinyl)-3-phosphoshikimate = chorismate + phosphate. The protein operates within metabolic intermediate biosynthesis; chorismate biosynthesis; chorismate from D-erythrose 4-phosphate and phosphoenolpyruvate: step 7/7. In terms of biological role, catalyzes the anti-1,4-elimination of the C-3 phosphate and the C-6 proR hydrogen from 5-enolpyruvylshikimate-3-phosphate (EPSP) to yield chorismate, which is the branch point compound that serves as the starting substrate for the three terminal pathways of aromatic amino acid biosynthesis. This reaction introduces a second double bond into the aromatic ring system. This is Chorismate synthase from Streptococcus pneumoniae serotype 2 (strain D39 / NCTC 7466).